Consider the following 178-residue polypeptide: Probable chorismate pyruvate-lyase (178 aa).

Residues Arg73, Leu111, and Glu163 each coordinate substrate.

Belongs to the UbiC family.

The protein resides in the cytoplasm. The catalysed reaction is chorismate = 4-hydroxybenzoate + pyruvate. It participates in cofactor biosynthesis; ubiquinone biosynthesis. Functionally, removes the pyruvyl group from chorismate, with concomitant aromatization of the ring, to provide 4-hydroxybenzoate (4HB) for the ubiquinone pathway. The protein is Probable chorismate pyruvate-lyase of Pseudomonas aeruginosa (strain UCBPP-PA14).